A 1256-amino-acid chain; its full sequence is Pullulanase A (1256 aa).

Positions 1-44 (MRKTPSHTEKKMVYSIRSLKNGTGSVLIGASLVLLAMATPTISS) are cleaved as a signal peptide. Residues 42-117 (ISSDESTPTT…VTTETKAEEP (76 aa)) are disordered. Low complexity predominate over residues 48 to 61 (TPTTNEPNNRNTTT). Polar residues predominate over residues 79-90 (DISSPRNANASL). Residues 99–111 (TEPTTSTSPVTTE) show a composition bias toward low complexity. Substrate contacts are provided by residues 141-143 (WTW), tryptophan 153, aspartate 199, 248-250 (WYW), tryptophan 261, lysine 303, and asparagine 308. Serine 646 and tyrosine 648 together coordinate Ca(2+). Substrate contacts are provided by residues 652–653 (YD) and phenylalanine 728. The Nucleophile role is filled by aspartate 763. Glutamate 792 acts as the Proton donor in catalysis. Tryptophan 794 provides a ligand contact to substrate. The Ca(2+) site is built by methionine 813, threonine 816, and aspartate 817. Substrate contacts are provided by aspartate 824, arginine 827, and tyrosine 834. 2 residues coordinate Ca(2+): aspartate 867 and aspartate 871. Substrate is bound by residues asparagine 881, lysine 954, and 974–976 (DSY). Aspartate 977 serves as a coordination point for Ca(2+). Residues 1126-1224 (SQNGTSHEST…TPDRQAELPN (99 aa)) are disordered. Basic and acidic residues predominate over residues 1134–1172 (STAEEKPDSTPSKPEHQDPAPEARPDSTKPDAKVADAEN). Positions 1181-1194 (SQAEQPAQEAQASS) are enriched in low complexity. Polar residues predominate over residues 1200–1210 (QNESVENSSKK). An LPXTG sorting signal motif is present at residues 1222 to 1226 (LPNTG). Threonine 1225 bears the Pentaglycyl murein peptidoglycan amidated threonine mark. The propeptide at 1226–1256 (GIKNENKLLFAGISLLALLGLGFLLKNKKEN) is removed by sortase.

Belongs to the glycosyl hydrolase 13 family.

The protein resides in the secreted. Its subcellular location is the cell wall. It localises to the cell surface. It catalyses the reaction Hydrolysis of (1-&gt;6)-alpha-D-glucosidic linkages in pullulan, amylopectin and glycogen, and in the alpha- and beta-limit dextrins of amylopectin and glycogen.. Its activity is regulated as follows. Inhibited by 4-O-alpha-D-glucopyranosylmoranoline (G1M). In terms of biological role, virulence factor. Involved in the degradation of glycogen of the mammalian host cells. Hydrolyzes the alpha-1,6-branchpoints of glycogen. Hydrolyzes pullulan. Does not hydrolyze dextran. Binds to mouse lung alveolar type II cells that are rich in glycogen stores. Is an alpha-glucan-specific carbohydrate-binding protein, which binds to amylose (pure alpha-(1,4)-linked glucose), amylopectin (alpha-(1,4)-linked glucose with alpha-(1,6) branch points), pullulan (linear polymer of mixed alpha-(1,4)- and alpha-(1,6)-linked glucose) and glycogen (similar to amylopectin with more frequent alpha-(1,6) branch points) in vitro. Does not bind to dextran (a linear polymer of alpha-(1,6)-linked glucose). The chain is Pullulanase A from Streptococcus pneumoniae serotype 2 (strain D39 / NCTC 7466).